Here is a 429-residue protein sequence, read N- to C-terminus: UDP-N-acetylglucosamine 1-carboxyvinyltransferase (429 aa).

22-23 lines the phosphoenolpyruvate pocket; sequence KN. Arg-93 lines the UDP-N-acetyl-alpha-D-glucosamine pocket. The active-site Proton donor is Cys-117. The residue at position 117 (Cys-117) is a 2-(S-cysteinyl)pyruvic acid O-phosphothioketal. Residues 122-126, Asp-307, and Val-329 each bind UDP-N-acetyl-alpha-D-glucosamine; that span reads RPVDL.

The protein belongs to the EPSP synthase family. MurA subfamily.

The protein localises to the cytoplasm. The enzyme catalyses phosphoenolpyruvate + UDP-N-acetyl-alpha-D-glucosamine = UDP-N-acetyl-3-O-(1-carboxyvinyl)-alpha-D-glucosamine + phosphate. The protein operates within cell wall biogenesis; peptidoglycan biosynthesis. In terms of biological role, cell wall formation. Adds enolpyruvyl to UDP-N-acetylglucosamine. This Chloroherpeton thalassium (strain ATCC 35110 / GB-78) protein is UDP-N-acetylglucosamine 1-carboxyvinyltransferase.